A 332-amino-acid polypeptide reads, in one-letter code: Protein pelota homolog (332 aa).

This sequence belongs to the eukaryotic release factor 1 family. Pelota subfamily. Monomer. A divalent metal cation serves as cofactor.

It localises to the cytoplasm. In terms of biological role, may function in recognizing stalled ribosomes, interact with stem-loop structures in stalled mRNA molecules, and effect endonucleolytic cleavage of the mRNA. May play a role in the release non-functional ribosomes and degradation of damaged mRNAs. Has endoribonuclease activity. The polypeptide is Protein pelota homolog (Pyrobaculum aerophilum (strain ATCC 51768 / DSM 7523 / JCM 9630 / CIP 104966 / NBRC 100827 / IM2)).